Reading from the N-terminus, the 321-residue chain is NADH-ubiquinone oxidoreductase chain 1 (321 aa).

The next 8 membrane-spanning stretches (helical) occupy residues isoleucine 7–methionine 27, isoleucine 73–isoleucine 93, leucine 104–glycine 124, valine 148–leucine 168, histidine 175–alanine 195, phenylalanine 227–isoleucine 247, glutamate 256–isoleucine 276, and leucine 297–isoleucine 317.

Belongs to the complex I subunit 1 family.

Its subcellular location is the mitochondrion inner membrane. The catalysed reaction is a ubiquinone + NADH + 5 H(+)(in) = a ubiquinol + NAD(+) + 4 H(+)(out). Core subunit of the mitochondrial membrane respiratory chain NADH dehydrogenase (Complex I) that is believed to belong to the minimal assembly required for catalysis. Complex I functions in the transfer of electrons from NADH to the respiratory chain. The immediate electron acceptor for the enzyme is believed to be ubiquinone. This chain is NADH-ubiquinone oxidoreductase chain 1 (MT-ND1), found in Varanus dumerilii (Dumeril's monitor).